We begin with the raw amino-acid sequence, 77 residues long: Sec-independent protein translocase protein TatA (77 aa).

A helical transmembrane segment spans residues 1–21 (MGSFSIWHWLIVLVIVMLVFG). Positions 50 to 77 (ADASTQQKISGGQTLEGEAREKVEKTHS) are disordered. Residues 53 to 62 (STQQKISGGQ) are compositionally biased toward polar residues. Residues 66–77 (GEAREKVEKTHS) are compositionally biased toward basic and acidic residues.

Belongs to the TatA/E family. As to quaternary structure, the Tat system comprises two distinct complexes: a TatABC complex, containing multiple copies of TatA, TatB and TatC subunits, and a separate TatA complex, containing only TatA subunits. Substrates initially bind to the TatABC complex, which probably triggers association of the separate TatA complex to form the active translocon.

The protein resides in the cell inner membrane. In terms of biological role, part of the twin-arginine translocation (Tat) system that transports large folded proteins containing a characteristic twin-arginine motif in their signal peptide across membranes. TatA could form the protein-conducting channel of the Tat system. This chain is Sec-independent protein translocase protein TatA, found in Azoarcus sp. (strain BH72).